The primary structure comprises 219 residues: VQ motif-containing protein 19 (219 aa).

Positions 47–56 (FKQVVQMLTG) match the VQ motif. The segment at 52-94 (QMLTGSSSPRSPDSPRPPTTPSGKGNFVIPPIKTAQPKKHSGN) is disordered. Residues S59, S65, S127, S131, S139, S141, and S152 each carry the phosphoserine modification. T155 carries the phosphothreonine modification. Disordered stretches follow at residues 156-177 (PLKQ…PLSE) and 190-219 (HRSP…SPEM). Residues S192 and S195 each carry the phosphoserine modification. Phosphothreonine is present on residues T196 and T211. 2 positions are modified to phosphoserine: S212 and S216.

In terms of processing, phosphorylated on serine and threonine residues by MPK6.

It is found in the nucleus. In terms of biological role, may modulate WRKY transcription factor activities. The protein is VQ motif-containing protein 19 of Arabidopsis thaliana (Mouse-ear cress).